The chain runs to 685 residues: Sodium-dependent phosphate transporter 1-A (685 aa).

The next 6 membrane-spanning stretches (helical) occupy residues 21–41, 66–86, 106–126, 162–182, 207–227, and 234–254; these read IMAP…VLAF, ACIL…AKVS, LMAG…AASF, IVLS…LLFL, ACTI…LLGF, and GIIL…WFVV. 2 disordered regions span residues 438-458 and 483-513; these read RNRD…HGAD and EAEE…HDQD. Positions 483 to 496 are enriched in acidic residues; that stretch reads EAEEQEEGSVEDVE. Positions 497–513 are enriched in basic and acidic residues; that stretch reads TDRKSSSSSLEERHDQD. The next 4 helical transmembrane spans lie at 517–537, 565–585, 606–626, and 656–676; these read VSLL…FAHG, ATPI…LWVW, FSIE…GLPI, and IFLA…GIMA.

Belongs to the inorganic phosphate transporter (PiT) (TC 2.A.20) family.

It is found in the membrane. Functionally, sodium-phosphate symporter which plays a fundamental housekeeping role in phosphate transport. The sequence is that of Sodium-dependent phosphate transporter 1-A (slc20a1-a) from Xenopus laevis (African clawed frog).